The primary structure comprises 214 residues: Adenylate kinase (214 aa).

10 to 15 (GAGKGT) is an ATP binding site. The interval 30-59 (STGDMLRAAVKAGTPLGLEAKKVMDAGQLV) is NMP. Residues threonine 31, arginine 36, 57-59 (QLV), 85-88 (GFPR), and glutamine 92 each bind AMP. The LID stretch occupies residues 122–159 (GRRVHPGSGRVYHVVFNPPKVEGKDDVTGEDLAIRPDD). ATP-binding positions include arginine 123 and 132-133 (VY). AMP is bound by residues arginine 156 and arginine 167. An ATP-binding site is contributed by glutamine 200.

This sequence belongs to the adenylate kinase family. Monomer.

The protein localises to the cytoplasm. It carries out the reaction AMP + ATP = 2 ADP. Its pathway is purine metabolism; AMP biosynthesis via salvage pathway; AMP from ADP: step 1/1. Its function is as follows. Catalyzes the reversible transfer of the terminal phosphate group between ATP and AMP. Plays an important role in cellular energy homeostasis and in adenine nucleotide metabolism. This chain is Adenylate kinase, found in Shewanella oneidensis (strain ATCC 700550 / JCM 31522 / CIP 106686 / LMG 19005 / NCIMB 14063 / MR-1).